A 364-amino-acid chain; its full sequence is 1-aminocyclopropane-1-carboxylate oxidase homolog 11 (364 aa).

In terms of domain architecture, Fe2OG dioxygenase spans 213-312; sequence KSLLMICHYY…RISVASFFSS (100 aa). Residues histidine 237, aspartate 239, and histidine 293 each coordinate Fe cation. A 2-oxoglutarate-binding site is contributed by arginine 303.

Belongs to the iron/ascorbate-dependent oxidoreductase family. Requires Fe(2+) as cofactor.

The polypeptide is 1-aminocyclopropane-1-carboxylate oxidase homolog 11 (Arabidopsis thaliana (Mouse-ear cress)).